Reading from the N-terminus, the 162-residue chain is Phosphopantetheine adenylyltransferase (162 aa).

Thr-10 contacts substrate. Residues 10-11 and His-18 each bind ATP; that span reads TF. Substrate contacts are provided by Lys-42, Leu-74, and Arg-88. ATP-binding positions include 89 to 91, Glu-99, and 124 to 130; these read GLR and FSCISST.

It belongs to the bacterial CoaD family. As to quaternary structure, homohexamer. Mg(2+) is required as a cofactor.

The protein localises to the cytoplasm. It carries out the reaction (R)-4'-phosphopantetheine + ATP + H(+) = 3'-dephospho-CoA + diphosphate. It functions in the pathway cofactor biosynthesis; coenzyme A biosynthesis; CoA from (R)-pantothenate: step 4/5. In terms of biological role, reversibly transfers an adenylyl group from ATP to 4'-phosphopantetheine, yielding dephospho-CoA (dPCoA) and pyrophosphate. This Francisella tularensis subsp. mediasiatica (strain FSC147) protein is Phosphopantetheine adenylyltransferase.